We begin with the raw amino-acid sequence, 117 residues long: MDMRVPAQLLGLLLLWLRGARCDIQMTQSPSSLSASVGDRVTITCRASQSISSYLNWYQQKPGKAPKLLIYAASSLQSGVPSRFSGSGSGTDFTLTISSLQPEDFATYYCQQSYSTP.

An N-terminal signal peptide occupies residues 1-22 (MDMRVPAQLLGLLLLWLRGARC). The tract at residues 23–45 (DIQMTQSPSSLSASVGDRVTITC) is framework-1. Positions 24–117 (IQMTQSPSSL…YYCQQSYSTP (94 aa)) constitute an Ig-like domain. Cysteine 45 and cysteine 110 are joined by a disulfide. The tract at residues 46–56 (RASQSISSYLN) is complementarity-determining-1. Positions 57–71 (WYQQKPGKAPKLLIY) are framework-2. Residues 72–78 (AASSLQS) form a complementarity-determining-2 region. Residues 79 to 110 (GVPSRFSGSGSGTDFTLTISSLQPEDFATYYC) form a framework-3 region. The segment at 111-117 (QQSYSTP) is complementarity-determining-3.

As to quaternary structure, immunoglobulins are composed of two identical heavy chains and two identical light chains; disulfide-linked.

The protein resides in the secreted. Its subcellular location is the cell membrane. Functionally, v region of the variable domain of immunoglobulin light chains that participates in the antigen recognition. Immunoglobulins, also known as antibodies, are membrane-bound or secreted glycoproteins produced by B lymphocytes. In the recognition phase of humoral immunity, the membrane-bound immunoglobulins serve as receptors which, upon binding of a specific antigen, trigger the clonal expansion and differentiation of B lymphocytes into immunoglobulins-secreting plasma cells. Secreted immunoglobulins mediate the effector phase of humoral immunity, which results in the elimination of bound antigens. The antigen binding site is formed by the variable domain of one heavy chain, together with that of its associated light chain. Thus, each immunoglobulin has two antigen binding sites with remarkable affinity for a particular antigen. The variable domains are assembled by a process called V-(D)-J rearrangement and can then be subjected to somatic hypermutations which, after exposure to antigen and selection, allow affinity maturation for a particular antigen. This Homo sapiens (Human) protein is Immunoglobulin kappa variable 1-39.